We begin with the raw amino-acid sequence, 353 residues long: Palmitoyltransferase SWF1 (353 aa).

Residue methionine 1 is a topological domain, lumenal. The chain crosses the membrane as a helical span at residues 2 to 22 (LFTLIVCLTIISSLATFLLLF). Topologically, residues 23 to 61 (GDSPSFRNTPIQKLRNSLLSISRDIFQFYHWLDEKLNGQ) are cytoplasmic. The helical transmembrane segment at 62 to 82 (LLKILNWLVPVGYVMVVTVCF) threads the bilayer. The Lumenal portion of the chain corresponds to 83 to 100 (QQFLTHTLPMLSSPGLFR). Residues 101–121 (LFTIYFSMVLIYASTILAAFS) traverse the membrane as a helical segment. The Cytoplasmic portion of the chain corresponds to 122-190 (DPGRITTINL…NNCVGYYNYK (69 aa)). A DHHC domain is found at 147–197 (KTCSTCHIAKPARSKHCSVCNQCFLLYDHHCVWINNCVGYYNYKWFMLFLI). Cysteine 177 serves as the catalytic S-palmitoyl cysteine intermediate. Residues 191-211 (WFMLFLISNINMLGYGGWLCY) form a helical membrane-spanning segment. Topologically, residues 212-233 (WALTPVSWRKITSTNNANKVTG) are lumenal. Residues 234 to 254 (IFLILCSIFIVITTLFTFLHL) form a helical membrane-spanning segment. The Cytoplasmic segment spans residues 255-353 (RYIYLGVTTN…WNNLIERLKW (99 aa)).

This sequence belongs to the DHHC palmitoyltransferase family. SWF1 subfamily.

It localises to the endoplasmic reticulum membrane. The enzyme catalyses L-cysteinyl-[protein] + hexadecanoyl-CoA = S-hexadecanoyl-L-cysteinyl-[protein] + CoA. Functionally, palmitoyltransferase that targets several endosomal SNAREs. Palmitoylates the SNAREs at cysteine residues close to the cytoplasmic end of their transmembrane domain. May have a role in the cellular quality control of transmembrane domain-containing proteins. This Candida albicans (strain SC5314 / ATCC MYA-2876) (Yeast) protein is Palmitoyltransferase SWF1 (SWF1).